A 383-amino-acid chain; its full sequence is uncharacterized protein (383 aa).

Positions M1 to A23 are cleaved as a signal peptide.

This sequence belongs to the but2 family.

It is found in the cytoplasm. The protein resides in the nucleus. This is an uncharacterized protein from Schizosaccharomyces pombe (strain 972 / ATCC 24843) (Fission yeast).